The following is a 440-amino-acid chain: Xaa-Pro dipeptidase (440 aa).

Positions 244, 255, 335, 380, and 419 each coordinate Mn(2+).

This sequence belongs to the peptidase M24B family. Bacterial-type prolidase subfamily. It depends on Mn(2+) as a cofactor.

It catalyses the reaction Xaa-L-Pro dipeptide + H2O = an L-alpha-amino acid + L-proline. In terms of biological role, splits dipeptides with a prolyl residue in the C-terminal position. In Shewanella piezotolerans (strain WP3 / JCM 13877), this protein is Xaa-Pro dipeptidase.